The primary structure comprises 409 residues: Dihydrolipoyllysine-residue succinyltransferase component of 2-oxoglutarate dehydrogenase complex (409 aa).

Residues 2–77 (AIEIKAPTFP…LSNELLGKLN (76 aa)) form the Lipoyl-binding domain. N6-lipoyllysine is present on Lys-43. A Peripheral subunit-binding (PSBD) domain is found at 112 to 149 (ILSPAARKLAEEAGIDPNSIAGTGKGGRVTKEDVVAAV). Residues His-380 and Asp-384 contribute to the active site.

This sequence belongs to the 2-oxoacid dehydrogenase family. As to quaternary structure, forms a 24-polypeptide structural core with octahedral symmetry. Part of the 2-oxoglutarate dehydrogenase (OGDH) complex composed of E1 (2-oxoglutarate dehydrogenase), E2 (dihydrolipoamide succinyltransferase) and E3 (dihydrolipoamide dehydrogenase); the complex contains multiple copies of the three enzymatic components (E1, E2 and E3). (R)-lipoate is required as a cofactor.

It catalyses the reaction N(6)-[(R)-dihydrolipoyl]-L-lysyl-[protein] + succinyl-CoA = N(6)-[(R)-S(8)-succinyldihydrolipoyl]-L-lysyl-[protein] + CoA. It participates in amino-acid degradation; L-lysine degradation via saccharopine pathway; glutaryl-CoA from L-lysine: step 6/6. Functionally, E2 component of the 2-oxoglutarate dehydrogenase (OGDH) complex which catalyzes the second step in the conversion of 2-oxoglutarate to succinyl-CoA and CO(2). The chain is Dihydrolipoyllysine-residue succinyltransferase component of 2-oxoglutarate dehydrogenase complex (sucB) from Pseudomonas aeruginosa (strain ATCC 15692 / DSM 22644 / CIP 104116 / JCM 14847 / LMG 12228 / 1C / PRS 101 / PAO1).